Reading from the N-terminus, the 165-residue chain is Cytochrome c-type biogenesis protein CcmE (165 aa).

Topologically, residues 1–7 (MTRKQRR) are cytoplasmic. The chain crosses the membrane as a helical; Signal-anchor for type II membrane protein span at residues 8–28 (LMMIGGAGVVLVVAVGLVLNA). The Periplasmic segment spans residues 29–165 (MRGSIVFFST…ASADAMRPAR (137 aa)). Heme is bound by residues His122 and Tyr126. Basic and acidic residues predominate over residues 138–149 (QGHWKDDYEKKP). A disordered region spans residues 138–165 (QGHWKDDYEKKPPGPGAAASADAMRPAR). Over residues 153-165 (GAAASADAMRPAR) the composition is skewed to low complexity.

The protein belongs to the CcmE/CycJ family.

It localises to the cell inner membrane. In terms of biological role, heme chaperone required for the biogenesis of c-type cytochromes. Transiently binds heme delivered by CcmC and transfers the heme to apo-cytochromes in a process facilitated by CcmF and CcmH. This is Cytochrome c-type biogenesis protein CcmE from Rhodopseudomonas palustris (strain HaA2).